Reading from the N-terminus, the 416-residue chain is D-amino acid dehydrogenase (416 aa).

Position 3–17 (3–17 (VIVLGAGIVGVTSAY)) interacts with FAD.

This sequence belongs to the DadA oxidoreductase family. It depends on FAD as a cofactor.

The enzyme catalyses a D-alpha-amino acid + A + H2O = a 2-oxocarboxylate + AH2 + NH4(+). It functions in the pathway amino-acid degradation; D-alanine degradation; NH(3) and pyruvate from D-alanine: step 1/1. Its function is as follows. Oxidative deamination of D-amino acids. This chain is D-amino acid dehydrogenase, found in Rhizobium johnstonii (strain DSM 114642 / LMG 32736 / 3841) (Rhizobium leguminosarum bv. viciae).